A 22-amino-acid chain; its full sequence is Hemoglobinase-like protein 2 (22 aa).

It belongs to the peptidase C13 family.

It catalyses the reaction Hydrolysis of proteins and small molecule substrates at -Asn-|-Xaa- bonds.. This Fasciola hepatica (Liver fluke) protein is Hemoglobinase-like protein 2.